Consider the following 436-residue polypeptide: GTPase Der (436 aa).

EngA-type G domains lie at 4–167 and 175–351; these read PTIA…PAQE and IKFS…ESQN. GTP-binding positions include 10–17, 57–61, 119–122, 181–188, 229–233, and 294–297; these read GRPNVGKS, DTGGI, NKVD, DTAGM, and NKWD. The 85-residue stretch at 352–436 folds into the KH-like domain; it reads TRIPSAVLND…PIHLIARKRK (85 aa).

Belongs to the TRAFAC class TrmE-Era-EngA-EngB-Septin-like GTPase superfamily. EngA (Der) GTPase family. In terms of assembly, associates with the 50S ribosomal subunit.

In terms of biological role, GTPase that plays an essential role in the late steps of ribosome biogenesis. In Streptococcus suis (strain 98HAH33), this protein is GTPase Der.